The primary structure comprises 546 residues: uncharacterized protein (546 aa).

The next 5 helical transmembrane spans lie at 4 to 23 (ILLENPLLVLFLVAAIGYPL), 30 to 47 (GSSLGVAAVLFVGLAMGS), 57 to 79 (IVYVLGLALFVYTIGLSSGPAFV), 91 to 113 (ALIIGMLLVAAGLVVGAQRLLGF), and 155 to 177 (PVVGYSVAYPMGVMGVVLAISLV). RCK C-terminal domains lie at 189–274 (GKRL…FLGE) and 275–359 (VSEE…FFGD). 6 consecutive transmembrane segments (helical) span residues 372 to 394 (FSLGLALGLLLGIIPIPLPGGIT), 399 to 421 (FAGGPLIVALILGTIGRSGSMVW), 434 to 456 (IGLVLFLAGVGTRAGYGFVTTLA), 460 to 482 (GLAIFAAGAVVTCLTALATLWIG), 489 to 511 (PMSILIGMVAGLQTQPAVLGYAL), and 521 to 543 (IGYASVYPVATISKILIVQILLT).

This sequence belongs to the AAE transporter (TC 2.A.81) family.

It is found in the cell membrane. This is an uncharacterized protein from Geobacter sulfurreducens (strain ATCC 51573 / DSM 12127 / PCA).